The following is a 428-amino-acid chain: Cytochrome bc complex cytochrome b subunit (428 aa).

2 stretches are compositionally biased toward low complexity: residues 1–15 (MAEN…TAPA) and 21–52 (APGA…AAAP). Residues 1–72 (MAENTPKPAA…RPDPNPFKDS (72 aa)) are disordered. The segment covering 59–72 (PPVDRPDPNPFKDS) has biased composition (basic and acidic residues). Residues 110–130 (YFGGLGLFFFVIQILTGLLLL) form a helical membrane-spanning segment. His-161 and His-175 together coordinate heme b. The next 6 membrane-spanning stretches (helical) occupy residues 162 to 182 (AWSA…TFFM), 193 to 213 (WVSG…GYLL), 260 to 280 (LHVV…LTLV), 312 to 331 (GIGW…MFPW), 369 to 389 (ELLA…VPFI), and 401 to 421 (IFTI…YRVY). Residues His-261 and His-276 each contribute to the heme b site.

Belongs to the cytochrome b family. Requires heme b as cofactor.

It localises to the cell inner membrane. In terms of biological role, component of the green S-bacteria bc complex, which consists of the Rieske protein and cytochrome b subunit but appears to lack a cytochrome c1-equivalent. This complex has a comparatively low redox potential. The chain is Cytochrome bc complex cytochrome b subunit (petB) from Chlorobaculum thiosulfatiphilum (Chlorobium limicola f.sp. thiosulfatophilum).